The sequence spans 277 residues: Large ribosomal subunit protein uL2 (277 aa).

The tract at residues 222–259 (GSVMNPNDHPHGGGEGKSPVGRPSPVTPWGKPALGYKT) is disordered.

It belongs to the universal ribosomal protein uL2 family. In terms of assembly, part of the 50S ribosomal subunit. Forms a bridge to the 30S subunit in the 70S ribosome.

Its function is as follows. One of the primary rRNA binding proteins. Required for association of the 30S and 50S subunits to form the 70S ribosome, for tRNA binding and peptide bond formation. It has been suggested to have peptidyltransferase activity; this is somewhat controversial. Makes several contacts with the 16S rRNA in the 70S ribosome. The polypeptide is Large ribosomal subunit protein uL2 (Clostridium beijerinckii (strain ATCC 51743 / NCIMB 8052) (Clostridium acetobutylicum)).